We begin with the raw amino-acid sequence, 249 residues long: Acidic leucine-rich nuclear phosphoprotein 32 family member A (249 aa).

Residue threonine 15 is modified to Phosphothreonine. Serine 17 bears the Phosphoserine mark. LRR repeat units follow at residues 18 to 38, 43 to 64, 65 to 87, and 89 to 110; these read DVKE…EGLT, ELEF…PKLN, KLKK…AEKC, and NLTH…EPLK. One can recognise an LRRCT domain in the interval 123 to 161; that stretch reads CEVTNLNDYRENVFKLLPQLTYLDGYDRDDKEAPDSDAE. The span at 147–156 shows a compositional bias: basic and acidic residues; it reads GYDRDDKEAP. The segment at 147–249 is disordered; sequence GYDRDDKEAP…EPEDEGEDDD (103 aa). The necessary for tumor-suppressive function stretch occupies residues 150-174; that stretch reads RDDKEAPDSDAEGYVEGLDDEEEDE. The segment covering 157-230 has biased composition (acidic residues); the sequence is DSDAEGYVEG…DEEDEEELGE (74 aa). Serine 158 and serine 204 each carry phosphoserine; by CK2. Residues 165 to 249 form an interaction with E4F1 region; the sequence is EGLDDEEEDE…EPEDEGEDDD (85 aa).

Belongs to the ANP32 family. As to quaternary structure, component of the SET complex, composed of at least ANP32A, APEX1, HMGB2, NME1, SET and TREX1. Directly interacts with SET. Interacts with ATXN1/SCA1. Interacts with MAP1B. Interacts with ELAVL1. Part of the INHAT (inhibitor of histone acetyltransferases) complex. Interacts with E4F1. In terms of assembly, (Microbial infection) Interacts (via C-terminus) with influenza virus A protein PB2; this interaction promotes viral replication. (Microbial infection) Interacts (via C-terminus) with influenza virus B protein PB2; this interaction promotes viral replication. As to quaternary structure, (Microbial infection) Interacts (via C-terminus) with influenza virus C protein PB2; this interaction promotes viral replication by bridging viral replicase dimers together. In terms of processing, phosphorylated on serine residues, at least in part by casein kinase 2/CK2. Post-translationally, the N-terminus is blocked. Some glutamate residues are glycylated by TTLL8. This modification occurs exclusively on glutamate residues and results in a glycine chain on the gamma-carboxyl group. Expressed in all tissues tested. Highly expressed in kidney and skeletal muscle, moderate levels of expression in brain, placenta and pancreas, and weakly expressed in lung. Found in all regions of the brain examined (amygdala, caudate nucleus, corpus callosum, hippocampus and thalamus), with highest levels in amygdala.

It localises to the nucleus. The protein localises to the cytoplasm. The protein resides in the endoplasmic reticulum. Its function is as follows. Multifunctional protein that is involved in the regulation of many processes including tumor suppression, apoptosis, cell cycle progression or transcription. Promotes apoptosis by favouring the activation of caspase-9/CASP9 and allowing apoptosome formation. In addition, plays a role in the modulation of histone acetylation and transcription as part of the INHAT (inhibitor of histone acetyltransferases) complex. Inhibits the histone-acetyltranferase activity of EP300/CREBBP (CREB-binding protein) and EP300/CREBBP-associated factor by histone masking. Preferentially binds to unmodified histone H3 and sterically inhibiting its acetylation and phosphorylation leading to cell growth inhibition. Participates in other biochemical processes such as regulation of mRNA nuclear-to-cytoplasmic translocation and stability by its association with ELAVL1 (Hu-antigen R). Plays a role in E4F1-mediated transcriptional repression as well as inhibition of protein phosphatase 2A. In terms of biological role, (Microbial infection) Plays an essential role in influenza A, B and C viral genome replication. Mechanistically, mediates the assembly of the viral replicase asymmetric dimers composed of PB1, PB2 and PA via its N-terminal region. Also plays an essential role in foamy virus mRNA export from the nucleus. This chain is Acidic leucine-rich nuclear phosphoprotein 32 family member A (ANP32A), found in Homo sapiens (Human).